A 108-amino-acid chain; its full sequence is Parvalbumin beta (108 aa).

A1 is subject to N-acetylalanine. 2 EF-hand domains span residues K38–G73 and L77–A108. Ca(2+) is bound by residues D51, D53, S55, F57, E59, E62, D90, D92, D94, K96, and E101.

This sequence belongs to the parvalbumin family.

In muscle, parvalbumin is thought to be involved in relaxation after contraction. It binds two calcium ions. The sequence is that of Parvalbumin beta from Latimeria chalumnae (Coelacanth).